An 876-amino-acid chain; its full sequence is AP-1 complex subunit gamma-1 (876 aa).

9 HEAT repeats span residues 97-135 (DERQ…ICSA), 136-173 (EMAR…KVPD), 248-284 (FLHI…KTES), 308-345 (SLRV…FDDQ), 346-382 (AVQR…ENNV), 384-417 (QLTK…KFSP), 418-454 (EKLW…NASE), 506-545 (VTES…RFPS), and 560-599 (SLLL…ATFN). Residues 756-873 (PAYAPIVAYE…LEEGQVSNFP (118 aa)) form the GAE domain.

Belongs to the adaptor complexes large subunit family. In terms of assembly, adaptor protein complex 1 (AP-1) is a heterotetramer composed of two large adaptins (gamma-type subunit and beta-type subunit), a medium adaptin (mu-type subunit) and a small adaptin (sigma-type subunit). Binds to EPSIN1. Interacts with DRP2A/ADL6 (via C-terminus).

It is found in the golgi apparatus. The protein resides in the cytoplasmic vesicle. Its subcellular location is the clathrin-coated vesicle membrane. Its function is as follows. Subunit of clathrin-associated adaptor protein complex 1 that plays a role in protein sorting at the trans-Golgi network and early endosomes (TGN/EE). The AP complexes mediate both the recruitment of clathrin to membranes and the recognition of sorting signals within the cytosolic tails of transmembrane cargo molecules. In Arabidopsis thaliana (Mouse-ear cress), this protein is AP-1 complex subunit gamma-1 (GAMMA-ADR).